We begin with the raw amino-acid sequence, 535 residues long: Light-independent protochlorophyllide reductase subunit B (535 aa).

Residue aspartate 36 coordinates [4Fe-4S] cluster. The active-site Proton donor is aspartate 287. 422–423 (GL) contacts substrate.

The protein belongs to the ChlB/BchB/BchZ family. In terms of assembly, protochlorophyllide reductase is composed of three subunits; BchL, BchN and BchB. Forms a heterotetramer of two BchB and two BchN subunits. The cofactor is [4Fe-4S] cluster.

It catalyses the reaction chlorophyllide a + oxidized 2[4Fe-4S]-[ferredoxin] + 2 ADP + 2 phosphate = protochlorophyllide a + reduced 2[4Fe-4S]-[ferredoxin] + 2 ATP + 2 H2O. It functions in the pathway porphyrin-containing compound metabolism; bacteriochlorophyll biosynthesis (light-independent). Functionally, component of the dark-operative protochlorophyllide reductase (DPOR) that uses Mg-ATP and reduced ferredoxin to reduce ring D of protochlorophyllide (Pchlide) to form chlorophyllide a (Chlide). This reaction is light-independent. The NB-protein (BchN-BchB) is the catalytic component of the complex. This chain is Light-independent protochlorophyllide reductase subunit B, found in Rhodopseudomonas palustris (strain BisB5).